The primary structure comprises 206 residues: uncharacterized protein (206 aa).

A helical transmembrane segment spans residues 21–43 (VPINITMSICALTALLKSYSITG).

It localises to the membrane. This is an uncharacterized protein from Acanthamoeba polyphaga (Amoeba).